The sequence spans 351 residues: 1-acylglycerol-3-phosphate O-acyltransferase ABHD5 (351 aa).

Positions Pro-79–Pro-184 constitute an AB hydrolase-1 domain. Ser-124 is subject to Phosphoserine. Residues His-329–Asp-334 carry the HXXXXD motif motif.

The protein belongs to the peptidase S33 family. ABHD4/ABHD5 subfamily. Interacts with ADRP. Interacts with PLIN. Interacts with and PNPLA2. Interacts with PLIN5; promotes interaction with PNPLA2. In terms of tissue distribution, highly expressed in the adipose tissue and testes. Weakly expressed in the liver, muscle, kidney, and heart. Expressed by upper epidermal layers and dermal fibroblasts in skin, hepatocytes and hypothalamus in brain (at protein level).

Its subcellular location is the cytoplasm. The protein localises to the lipid droplet. It is found in the cytosol. The enzyme catalyses a 1-acyl-sn-glycero-3-phosphate + an acyl-CoA = a 1,2-diacyl-sn-glycero-3-phosphate + CoA. It catalyses the reaction 1-(9Z-octadecenoyl)-sn-glycero-3-phosphate + (9Z)-octadecenoyl-CoA = 1,2-di-(9Z-octadecenoyl)-sn-glycero-3-phosphate + CoA. The catalysed reaction is 1-(9Z-octadecenoyl)-sn-glycero-3-phosphate + hexadecanoyl-CoA = 1-(9Z)-octadecenoyl-2-hexadecanoyl-sn-glycero-3-phosphate + CoA. It carries out the reaction 1-(9Z-octadecenoyl)-sn-glycero-3-phosphate + octadecanoyl-CoA = 1-(9Z-octadecenoyl)-2-octadecanoyl-sn-glycero-3-phosphate + CoA. The enzyme catalyses 1-(9Z-octadecenoyl)-sn-glycero-3-phosphate + (5Z,8Z,11Z,14Z)-eicosatetraenoyl-CoA = 1-(9Z)-octadecenoyl-2-(5Z,8Z,11Z,14Z)-eicosatetraenoyl-sn-glycero-3-phosphate + CoA. It catalyses the reaction eicosanoyl-CoA + 1-(9Z-octadecenoyl)-sn-glycero-3-phosphate = 1-(9Z)-octadecenoyl-2-eicosanoyl-sn-glycero-3-phosphate + CoA. The catalysed reaction is 1-hexadecanoyl-sn-glycero-3-phosphate + (9Z)-octadecenoyl-CoA = 1-hexadecanoyl-2-(9Z-octadecenoyl)-sn-glycero-3-phosphate + CoA. It carries out the reaction 1-octadecanoyl-sn-glycero-3-phosphate + (9Z)-octadecenoyl-CoA = 1-octadecanoyl-2-(9Z-octadecenoyl)-sn-glycero-3-phosphate + CoA. The enzyme catalyses 1-(5Z,8Z,11Z,14Z-eicosatetraenoyl)-sn-glycero-3-phosphate + (9Z)-octadecenoyl-CoA = 1-(5Z,8Z,11Z,14Z)-eicosatetraenoyl-2-(9Z)-octadecenoyl-sn-glycero-3-phosphate + CoA. With respect to regulation, acyltransferase activity is inhibited by detergents such as Triton X-100 and 3-[(3-cholamidopropyl)dimethylammonio]-1-propanesulfonate (CHAPS). Acyltransferase activity is inhibited by the presence of magnesium and calcium. Functionally, coenzyme A-dependent lysophosphatidic acid acyltransferase that catalyzes the transfer of an acyl group on a lysophosphatidic acid. Functions preferentially with 1-oleoyl-lysophosphatidic acid followed by 1-palmitoyl-lysophosphatidic acid, 1-stearoyl-lysophosphatidic acid and 1-arachidonoyl-lysophosphatidic acid as lipid acceptor. Functions preferentially with arachidonoyl-CoA followed by oleoyl-CoA as acyl group donors. Functions in phosphatidic acid biosynthesis. May regulate the cellular storage of triacylglycerol through activation of the phospholipase PNPLA2. Involved in keratinocyte differentiation. Regulates lipid droplet fusion. This chain is 1-acylglycerol-3-phosphate O-acyltransferase ABHD5, found in Mus musculus (Mouse).